The chain runs to 160 residues: S-adenosylmethionine decarboxylase proenzyme (160 aa).

The active-site Schiff-base intermediate with substrate; via pyruvic acid is the Ser73. Residue Ser73 is modified to Pyruvic acid (Ser); by autocatalysis. Residue His78 is the Proton acceptor; for processing activity of the active site. Cys93 functions as the Proton donor; for catalytic activity in the catalytic mechanism.

The protein belongs to the prokaryotic AdoMetDC family. Type 1 subfamily. As to quaternary structure, heterotetramer of two alpha and two beta chains arranged as a dimer of alpha/beta heterodimers. The cofactor is pyruvate. Is synthesized initially as an inactive proenzyme. Formation of the active enzyme involves a self-maturation process in which the active site pyruvoyl group is generated from an internal serine residue via an autocatalytic post-translational modification. Two non-identical subunits are generated from the proenzyme in this reaction, and the pyruvate is formed at the N-terminus of the alpha chain, which is derived from the carboxyl end of the proenzyme. The post-translation cleavage follows an unusual pathway, termed non-hydrolytic serinolysis, in which the side chain hydroxyl group of the serine supplies its oxygen atom to form the C-terminus of the beta chain, while the remainder of the serine residue undergoes an oxidative deamination to produce ammonia and the pyruvoyl group blocking the N-terminus of the alpha chain.

The enzyme catalyses S-adenosyl-L-methionine + H(+) = S-adenosyl 3-(methylsulfanyl)propylamine + CO2. The protein operates within amine and polyamine biosynthesis; S-adenosylmethioninamine biosynthesis; S-adenosylmethioninamine from S-adenosyl-L-methionine: step 1/1. Its function is as follows. Catalyzes the decarboxylation of S-adenosylmethionine to S-adenosylmethioninamine (dcAdoMet), the propylamine donor required for the synthesis of the polyamines spermine and spermidine from the diamine putrescine. This Pseudomonas paraeruginosa (strain DSM 24068 / PA7) (Pseudomonas aeruginosa (strain PA7)) protein is S-adenosylmethionine decarboxylase proenzyme.